The sequence spans 460 residues: tRNA-2-methylthio-N(6)-dimethylallyladenosine synthase (460 aa).

An MTTase N-terminal domain is found at Gly10–Ser126. Residues Cys19, Cys55, Cys89, Cys161, Cys165, and Cys168 each coordinate [4Fe-4S] cluster. Positions Arg147–Glu384 constitute a Radical SAM core domain. The region spanning Ala387 to Pro455 is the TRAM domain.

The protein belongs to the methylthiotransferase family. MiaB subfamily. Monomer. [4Fe-4S] cluster is required as a cofactor.

The protein resides in the cytoplasm. It carries out the reaction N(6)-dimethylallyladenosine(37) in tRNA + (sulfur carrier)-SH + AH2 + 2 S-adenosyl-L-methionine = 2-methylsulfanyl-N(6)-dimethylallyladenosine(37) in tRNA + (sulfur carrier)-H + 5'-deoxyadenosine + L-methionine + A + S-adenosyl-L-homocysteine + 2 H(+). Its function is as follows. Catalyzes the methylthiolation of N6-(dimethylallyl)adenosine (i(6)A), leading to the formation of 2-methylthio-N6-(dimethylallyl)adenosine (ms(2)i(6)A) at position 37 in tRNAs that read codons beginning with uridine. This chain is tRNA-2-methylthio-N(6)-dimethylallyladenosine synthase, found in Parasynechococcus marenigrum (strain WH8102).